Reading from the N-terminus, the 211-residue chain is Metalloproteinase inhibitor 3 (211 aa).

Residues 1–23 (MTPWLGLIVLLGSWSLGDWGAEA) form the signal peptide. Residue Cys24 coordinates Zn(2+). Involved in metalloproteinase-binding regions lie at residues 24 to 27 (CTCS) and 88 to 89 (ES). Cystine bridges form between Cys24/Cys91, Cys26/Cys118, Cys36/Cys143, Cys145/Cys192, Cys150/Cys155, and Cys163/Cys184. The NTR domain maps to 24–143 (CTCSPSHPQD…GLNYRYHLGC (120 aa)). Positions 105–188 (TGRVYDGKMY…SKHYACIRQK (84 aa)) are mediates interaction with EFEMP1. Asn207 is a glycosylation site (N-linked (GlcNAc...) asparagine).

This sequence belongs to the protease inhibitor I35 (TIMP) family. Interacts with EFEMP1. Interacts with KDR.

It localises to the secreted. The protein resides in the extracellular space. The protein localises to the extracellular matrix. Functionally, mediates a variety of processes including matrix regulation and turnover, inflammation, and angiogenesis, through reversible inhibition of zinc protease superfamily enzymes, primarily matrix metalloproteinases (MMPs). Regulates extracellular matrix (ECM) remodeling through inhibition of matrix metalloproteinases (MMP) including MMP-1, MMP-2, MMP-3, MMP-7, MMP-9, MMP-13, MMP-14 and MMP-15. Additionally, modulates the processing of amyloid precursor protein (APP) and apolipoprotein E receptor ApoER2 by inhibiting two alpha-secretases ADAM10 and ADAM17. Functions as a tumor suppressor and a potent inhibitor of angiogenesis. Exerts its anti-angiogenic effect by directly interacting with vascular endothelial growth factor (VEGF) receptor-2/KDR, preventing its binding to the VEGFA ligand. Selectively induces apoptosis in angiogenic endothelial cells through a caspase-independent cell death pathway. Mechanistically, inhibits matrix-induced focal adhesion kinase PTK2 tyrosine phosphorylation and association with paxillin/PXN and disrupts the incorporation of ITGB3, PTK2 and PXN into focal adhesion contacts on the matrix. The polypeptide is Metalloproteinase inhibitor 3 (TIMP3) (Macaca mulatta (Rhesus macaque)).